The chain runs to 116 residues: Chorion protein S15 (116 aa).

Residues 1–18 (MKFLIAFAVLALVACINA) form the signal peptide.

The protein belongs to the chorion protein S15/S18 family.

Its subcellular location is the secreted. Chorion membrane (egg shell) protein; plays a role in protecting the egg from the environment. The sequence is that of Chorion protein S15 (Cp15) from Drosophila virilis (Fruit fly).